The primary structure comprises 277 residues: 3-methyl-2-oxobutanoate hydroxymethyltransferase (277 aa).

Mg(2+) is bound by residues Asp53 and Asp96. 3-methyl-2-oxobutanoate is bound by residues 53–54 (DS), Asp96, and Lys126. Glu128 is a binding site for Mg(2+). Glu195 acts as the Proton acceptor in catalysis.

The protein belongs to the PanB family. In terms of assembly, homodecamer; pentamer of dimers. Mg(2+) is required as a cofactor.

Its subcellular location is the cytoplasm. The enzyme catalyses 3-methyl-2-oxobutanoate + (6R)-5,10-methylene-5,6,7,8-tetrahydrofolate + H2O = 2-dehydropantoate + (6S)-5,6,7,8-tetrahydrofolate. Its pathway is cofactor biosynthesis; (R)-pantothenate biosynthesis; (R)-pantoate from 3-methyl-2-oxobutanoate: step 1/2. Its function is as follows. Catalyzes the reversible reaction in which hydroxymethyl group from 5,10-methylenetetrahydrofolate is transferred onto alpha-ketoisovalerate to form ketopantoate. The chain is 3-methyl-2-oxobutanoate hydroxymethyltransferase from Chlorobium phaeobacteroides (strain BS1).